Consider the following 498-residue polypeptide: Protein flp (498 aa).

Helical transmembrane passes span 6–26 (LYFL…IHIT), 389–409 (FNIV…FSAY), 433–453 (LTLC…YLIL), and 471–491 (LALI…LLFL).

Its subcellular location is the cell membrane. Its precise function is unknown. Has no penicillin-binding activity and is not involved in methicillin resistance. This Staphylococcus aureus (strain MW2) protein is Protein flp (flp).